Consider the following 372-residue polypeptide: D-alanine--D-alanine ligase (372 aa).

Positions 145-349 (KTVLRAGGIP…CPNLLDQLIE (205 aa)) constitute an ATP-grasp domain. 176–231 (DRWGTSELFVKAVSLGSSVATLPVKTETEFTKAVKEVFRYDDRLMVEPRIRGREIE) serves as a coordination point for ATP. Residues D303, E316, and N318 each coordinate Mg(2+).

This sequence belongs to the D-alanine--D-alanine ligase family. It depends on Mg(2+) as a cofactor. Requires Mn(2+) as cofactor.

Its subcellular location is the cytoplasm. The catalysed reaction is 2 D-alanine + ATP = D-alanyl-D-alanine + ADP + phosphate + H(+). The protein operates within cell wall biogenesis; peptidoglycan biosynthesis. In terms of biological role, cell wall formation. The polypeptide is D-alanine--D-alanine ligase (Coxiella burnetii (strain CbuK_Q154) (Coxiella burnetii (strain Q154))).